We begin with the raw amino-acid sequence, 225 residues long: Lipoprotein CseA (225 aa).

The signal sequence occupies residues 1–36; sequence MRGLTDGRTPRGTRRTTQAASTAVAVFVALGVSLAG. Cys37 is lipidated: N-palmitoyl cysteine. Cys37 carries S-diacylglycerol cysteine lipidation. 2 disordered regions span residues 40 to 77 and 205 to 225; these read GGTGARDEGPAHADAVGGAGSASPAPAAKASPSKAPDR and THNDYSKAAGNAPTPAPEPDS. The span at 60–73 shows a compositional bias: low complexity; the sequence is SASPAPAAKASPSK.

The protein resides in the cell membrane. In terms of biological role, may be involved in the stabilization of the cell envelope or may interact with the sensor protein CseC to modulate its activity, in response to cell envelope stress. This chain is Lipoprotein CseA (cseA), found in Streptomyces coelicolor (strain ATCC BAA-471 / A3(2) / M145).